The following is a 163-amino-acid chain: Probable calcium-binding protein CML26 (163 aa).

Ala2 bears the N-acetylalanine mark. EF-hand domains lie at 16-51, 52-82, 85-120, and 121-156; these read STDM…MGTS, YTEE…TICR, SSAV…LGMT, and CSVE…PELV. Asp29, Asn31, Asp33, Lys35, Glu40, Asp65, Asp67, Asp69, Glu76, Asp98, Asn100, Asn102, Glu109, Asp134, Asp136, Asp138, Asn140, and Glu145 together coordinate Ca(2+).

In terms of biological role, potential calcium sensor. This Arabidopsis thaliana (Mouse-ear cress) protein is Probable calcium-binding protein CML26 (CML26).